The primary structure comprises 460 residues: L-seryl-tRNA(Sec) selenium transferase (460 aa).

K293 is modified (N6-(pyridoxal phosphate)lysine).

This sequence belongs to the SelA family. Pyridoxal 5'-phosphate is required as a cofactor.

It is found in the cytoplasm. It catalyses the reaction L-seryl-tRNA(Sec) + selenophosphate + H(+) = L-selenocysteinyl-tRNA(Sec) + phosphate. It participates in aminoacyl-tRNA biosynthesis; selenocysteinyl-tRNA(Sec) biosynthesis; selenocysteinyl-tRNA(Sec) from L-seryl-tRNA(Sec) (bacterial route): step 1/1. Functionally, converts seryl-tRNA(Sec) to selenocysteinyl-tRNA(Sec) required for selenoprotein biosynthesis. This chain is L-seryl-tRNA(Sec) selenium transferase, found in Haemophilus ducreyi (strain 35000HP / ATCC 700724).